The chain runs to 154 residues: Myoglobin (154 aa).

Residues 2-148 form the Globin domain; sequence GLSDDEWHHV…FRNDMASKYK (147 aa). His65 contributes to the nitrite binding site. His65 lines the O2 pocket. His94 contacts heme b.

Belongs to the globin family. Monomeric.

It is found in the cytoplasm. It localises to the sarcoplasm. It catalyses the reaction Fe(III)-heme b-[protein] + nitric oxide + H2O = Fe(II)-heme b-[protein] + nitrite + 2 H(+). The enzyme catalyses H2O2 + AH2 = A + 2 H2O. Its function is as follows. Monomeric heme protein which primary function is to store oxygen and facilitate its diffusion within muscle tissues. Reversibly binds oxygen through a pentacoordinated heme iron and enables its timely and efficient release as needed during periods of heightened demand. Depending on the oxidative conditions of tissues and cells, and in addition to its ability to bind oxygen, it also has a nitrite reductase activity whereby it regulates the production of bioactive nitric oxide. Under stress conditions, like hypoxia and anoxia, it also protects cells against reactive oxygen species thanks to its pseudoperoxidase activity. The polypeptide is Myoglobin (MB) (Graptemys geographica (Common map turtle)).